The primary structure comprises 2014 residues: AP-1 accessory protein LAA1 (2014 aa).

As to quaternary structure, interacts with the clathrin-associated adapter complex AP-1. Interacts directly with LAA2.

The protein localises to the golgi apparatus. It localises to the cytoplasmic vesicle. Its subcellular location is the clathrin-coated vesicle. Involved in localization of clathrin adapter protein complex-1 (AP-1) and subsequent AP-1-mediated clathrin-coated vesicle cargo loading. In complex with LAA2, cooperates with the small GTPase ARF1 and the phosphatidyl-inositol-4-phosphate (PI4P) synthesis to confer temporal specificity to AP-1 recruitment. This Saccharomyces cerevisiae (strain ATCC 204508 / S288c) (Baker's yeast) protein is AP-1 accessory protein LAA1.